Here is a 331-residue protein sequence, read N- to C-terminus: Probable leucine carboxyl methyltransferase 1 (331 aa).

Residues Arg82, Gly107, Asp131, 179–180, and Glu206 each bind S-adenosyl-L-methionine; that span reads DL.

The protein belongs to the methyltransferase superfamily. LCMT family.

It carries out the reaction [phosphatase 2A protein]-C-terminal L-leucine + S-adenosyl-L-methionine = [phosphatase 2A protein]-C-terminal L-leucine methyl ester + S-adenosyl-L-homocysteine. In terms of biological role, methylates the carboxyl group of the C-terminal leucine residue of protein phosphatase 2A catalytic subunits to form alpha-leucine ester residues. The sequence is that of Probable leucine carboxyl methyltransferase 1 from Caenorhabditis briggsae.